Reading from the N-terminus, the 250-residue chain is Flavin-dependent thymidylate synthase (250 aa).

Residues L7 to T233 enclose the ThyX domain. DUMP is bound by residues E92–R95, Q103–R107, and R172. Residues R95–R97 and Q103 each bind FAD. Residues R95 to S105 carry the ThyX motif motif. FAD is bound by residues N188–R190 and H194. Residue R199 participates in dUMP binding. Catalysis depends on R199, which acts as the Involved in ionization of N3 of dUMP, leading to its activation.

Belongs to the thymidylate synthase ThyX family. Homotetramer. The cofactor is FAD.

It carries out the reaction dUMP + (6R)-5,10-methylene-5,6,7,8-tetrahydrofolate + NADPH + H(+) = dTMP + (6S)-5,6,7,8-tetrahydrofolate + NADP(+). It participates in pyrimidine metabolism; dTTP biosynthesis. Catalyzes the reductive methylation of 2'-deoxyuridine-5'-monophosphate (dUMP) to 2'-deoxythymidine-5'-monophosphate (dTMP) while utilizing 5,10-methylenetetrahydrofolate (mTHF) as the methyl donor, and NADPH and FADH(2) as the reductant. The sequence is that of Flavin-dependent thymidylate synthase from Mycobacterium marinum (strain ATCC BAA-535 / M).